The sequence spans 376 residues: Pulmonary surfactant-associated protein B (376 aa).

The signal sequence occupies residues 1-24; it reads MAKLHLQWLLLLPTLCSLGAATES. One can recognise a Saposin A-type domain in the interval 25–63; it reads ASSPDCAQGPKFWCQSLEQAIQCRALGHCLQEVWGHAGA. Positions 25–190 are excised as a propeptide; that stretch reads ASSPDCAQGP…PHTQDLSEQQ (166 aa). Saposin B-type domains are found at residues 63–145, 194–271, and 290–365; these read ANDL…PLGQ, PLPF…STAD, and QDTE…EAPA. 9 cysteine pairs are disulfide-bonded: Cys-67–Cys-141, Cys-70–Cys-135, Cys-98–Cys-110, Cys-198–Cys-267, Cys-201–Cys-261, Cys-225–Cys-236, Cys-294–Cys-361, Cys-297–Cys-355, and Cys-320–Cys-330. A propeptide spanning residues 270–376 is cleaved from the precursor; the sequence is ADAIGPALPA…PLQCFQTPHL (107 aa). The N-linked (GlcNAc...) asparagine glycan is linked to Asn-306.

As to quaternary structure, homodimer; disulfide-linked.

The protein localises to the secreted. The protein resides in the extracellular space. It is found in the surface film. In terms of biological role, pulmonary surfactant-associated proteins promote alveolar stability by lowering the surface tension at the air-liquid interface in the peripheral air spaces. SP-B increases the collapse pressure of palmitic acid to nearly 70 millinewtons per meter. This is Pulmonary surfactant-associated protein B (Sftpb) from Rattus norvegicus (Rat).